We begin with the raw amino-acid sequence, 366 residues long: Zinc finger protein ubi-d4 B (366 aa).

Disordered stretches follow at residues 41–94 (ASAP…DGSS) and 140–167 (DDLD…IGGA). A compositionally biased stretch (basic and acidic residues) spans 76-86 (PDPEQMLKKEG). Positions 140-149 (DDLDDEDYEE) are enriched in acidic residues. The segment at 183–206 (YACDICGKRYKNRPGLSYHYAHSH) adopts a C2H2-type zinc-finger fold. The tract at residues 211–243 (EGAGAEDKEDSQPPTPIMHRSEEQKSKKGPDGL) is disordered. Residues 229–240 (HRSEEQKSKKGP) are compositionally biased toward basic and acidic residues. 2 consecutive PHD-type zinc fingers follow at residues 247–307 (NNYC…CKCC) and 304–354 (CKCC…CLDL).

The protein belongs to the requiem/DPF family.

It localises to the cytoplasm. Its subcellular location is the nucleus. Functionally, may be a transcription factor required for the apoptosis response following survival factor withdrawal from myeloid cells. Might also have a role in the development and maturation of lymphoid cells. The protein is Zinc finger protein ubi-d4 B (req-b) of Xenopus laevis (African clawed frog).